A 308-amino-acid polypeptide reads, in one-letter code: Nodulation protein D 1 (308 aa).

Residues 6-63 (LDLNLLVALDALMTERKLTAAARRINLSQPAMSAAIARLRTYFGDELFSMQGRELIPT) form the HTH lysR-type domain. A DNA-binding region (H-T-H motif) is located at residues 23 to 42 (LTAAARRINLSQPAMSAAIA).

Belongs to the LysR transcriptional regulatory family.

Functionally, nodD regulates the expression of the nodABCFE genes which encode other nodulation proteins. NodD is also a negative regulator of its own expression. Binds flavonoids as inducers. The protein is Nodulation protein D 1 (nodD1) of Rhizobium meliloti (strain 1021) (Ensifer meliloti).